We begin with the raw amino-acid sequence, 187 residues long: Peptide deformylase 1 (187 aa).

Fe cation-binding residues include cysteine 107 and histidine 149. Residue glutamate 150 is part of the active site. Residue histidine 153 coordinates Fe cation.

This sequence belongs to the polypeptide deformylase family. The cofactor is Fe(2+).

The enzyme catalyses N-terminal N-formyl-L-methionyl-[peptide] + H2O = N-terminal L-methionyl-[peptide] + formate. Removes the formyl group from the N-terminal Met of newly synthesized proteins. Requires at least a dipeptide for an efficient rate of reaction. N-terminal L-methionine is a prerequisite for activity but the enzyme has broad specificity at other positions. The chain is Peptide deformylase 1 from Nostoc sp. (strain PCC 7120 / SAG 25.82 / UTEX 2576).